The sequence spans 251 residues: Triosephosphate isomerase, glycosomal (251 aa).

Substrate-binding residues include N12 and K14. The active-site Electrophile is the H96. E168 acts as the Proton acceptor in catalysis.

It belongs to the triosephosphate isomerase family. As to quaternary structure, homodimer.

It localises to the glycosome. It catalyses the reaction D-glyceraldehyde 3-phosphate = dihydroxyacetone phosphate. The protein operates within carbohydrate biosynthesis; gluconeogenesis. It functions in the pathway carbohydrate degradation; glycolysis; D-glyceraldehyde 3-phosphate from glycerone phosphate: step 1/1. The protein is Triosephosphate isomerase, glycosomal of Trypanosoma cruzi.